A 181-amino-acid chain; its full sequence is Acireductone dioxygenase (181 aa).

Positions 97, 99, 103, and 141 each coordinate Fe(2+). Residues histidine 97, histidine 99, glutamate 103, and histidine 141 each contribute to the Ni(2+) site.

This sequence belongs to the acireductone dioxygenase (ARD) family. As to quaternary structure, monomer. Fe(2+) is required as a cofactor. It depends on Ni(2+) as a cofactor.

The enzyme catalyses 1,2-dihydroxy-5-(methylsulfanyl)pent-1-en-3-one + O2 = 3-(methylsulfanyl)propanoate + CO + formate + 2 H(+). The catalysed reaction is 1,2-dihydroxy-5-(methylsulfanyl)pent-1-en-3-one + O2 = 4-methylsulfanyl-2-oxobutanoate + formate + 2 H(+). It participates in amino-acid biosynthesis; L-methionine biosynthesis via salvage pathway; L-methionine from S-methyl-5-thio-alpha-D-ribose 1-phosphate: step 5/6. Catalyzes 2 different reactions between oxygen and the acireductone 1,2-dihydroxy-3-keto-5-methylthiopentene (DHK-MTPene) depending upon the metal bound in the active site. Fe-containing acireductone dioxygenase (Fe-ARD) produces formate and 2-keto-4-methylthiobutyrate (KMTB), the alpha-ketoacid precursor of methionine in the methionine recycle pathway. Ni-containing acireductone dioxygenase (Ni-ARD) produces methylthiopropionate, carbon monoxide and formate, and does not lie on the methionine recycle pathway. The polypeptide is Acireductone dioxygenase (Pseudomonas fluorescens (strain ATCC BAA-477 / NRRL B-23932 / Pf-5)).